Here is a 331-residue protein sequence, read N- to C-terminus: MKQTVYTASPESQQIHVWSLNHEGMLTLVQVVDVPGQVQPMVVSPDKRYLYVGVRPEFRVLAYRIAPDDGALTFATESALPGSPTHISTDHHGRFVFVGSYNAGNVSVTRLQDGLPVELVDVVEGLDGCHSANITPDNRTLWVPALKQDRIALFTLSDDGYLAAQEPAEVNTVEGAGPRHMVFHPNQQYAYCVNELNSSVDVWQLKNPHGEIECVQTLDMMPADFSDTRWAADIHITPDGRHLYACDRTASLITVFSVSEDGSVLSVEGFQPTETQPRGFNIDHHGKYLIAAGQKSHHIAVYEIAGAQGLLTEKGRYAVGQGPMWVVVNAY.

It belongs to the cycloisomerase 2 family.

It catalyses the reaction 6-phospho-D-glucono-1,5-lactone + H2O = 6-phospho-D-gluconate + H(+). It functions in the pathway carbohydrate degradation; pentose phosphate pathway; D-ribulose 5-phosphate from D-glucose 6-phosphate (oxidative stage): step 2/3. Functionally, catalyzes the hydrolysis of 6-phosphogluconolactone to 6-phosphogluconate. This chain is 6-phosphogluconolactonase, found in Salmonella arizonae (strain ATCC BAA-731 / CDC346-86 / RSK2980).